The primary structure comprises 175 residues: ATP synthase subunit delta (175 aa).

It belongs to the ATPase delta chain family. In terms of assembly, F-type ATPases have 2 components, F(1) - the catalytic core - and F(0) - the membrane proton channel. F(1) has five subunits: alpha(3), beta(3), gamma(1), delta(1), epsilon(1). F(0) has three main subunits: a(1), b(2) and c(10-14). The alpha and beta chains form an alternating ring which encloses part of the gamma chain. F(1) is attached to F(0) by a central stalk formed by the gamma and epsilon chains, while a peripheral stalk is formed by the delta and b chains.

It localises to the cell inner membrane. F(1)F(0) ATP synthase produces ATP from ADP in the presence of a proton or sodium gradient. F-type ATPases consist of two structural domains, F(1) containing the extramembraneous catalytic core and F(0) containing the membrane proton channel, linked together by a central stalk and a peripheral stalk. During catalysis, ATP synthesis in the catalytic domain of F(1) is coupled via a rotary mechanism of the central stalk subunits to proton translocation. Its function is as follows. This protein is part of the stalk that links CF(0) to CF(1). It either transmits conformational changes from CF(0) to CF(1) or is implicated in proton conduction. The chain is ATP synthase subunit delta from Xylella fastidiosa (strain M12).